The primary structure comprises 239 residues: Heptaprenylglyceryl phosphate synthase (239 aa).

Lys-12 lines the sn-glycerol 1-phosphate pocket. Residues Asp-14 and Thr-40 each coordinate Mg(2+). Residues 159-164, Gly-189, and 209-210 each bind sn-glycerol 1-phosphate; these read YLEYSG and GN.

The protein belongs to the GGGP/HepGP synthase family. Group I subfamily. Homodimer. Mg(2+) serves as cofactor.

The enzyme catalyses sn-glycerol 1-phosphate + all-trans-heptaprenyl diphosphate = 3-heptaprenyl-sn-glycero-1-phosphate + diphosphate. It functions in the pathway membrane lipid metabolism; glycerophospholipid metabolism. Prenyltransferase that catalyzes in vivo the transfer of the heptaprenyl moiety of heptaprenyl pyrophosphate (HepPP; 35 carbon atoms) to the C3 hydroxyl of sn-glycerol-1-phosphate (G1P), producing heptaprenylglyceryl phosphate (HepGP). This reaction is an ether-bond-formation step in the biosynthesis of archaea-type G1P-based membrane lipids found in Bacillales. The sequence is that of Heptaprenylglyceryl phosphate synthase from Geobacillus thermodenitrificans (strain NG80-2).